The following is a 351-amino-acid chain: 3-dehydroquinate synthase (351 aa).

Residues 60-65 (DGEEYK), 94-98 (GVISD), 118-119 (TT), Lys-131, Lys-140, and 158-161 (FLKT) contribute to the NAD(+) site. Zn(2+)-binding residues include Glu-173, His-239, and His-256.

It belongs to the sugar phosphate cyclases superfamily. Dehydroquinate synthase family. Requires Co(2+) as cofactor. Zn(2+) is required as a cofactor. NAD(+) serves as cofactor.

Its subcellular location is the cytoplasm. It carries out the reaction 7-phospho-2-dehydro-3-deoxy-D-arabino-heptonate = 3-dehydroquinate + phosphate. It participates in metabolic intermediate biosynthesis; chorismate biosynthesis; chorismate from D-erythrose 4-phosphate and phosphoenolpyruvate: step 2/7. Catalyzes the conversion of 3-deoxy-D-arabino-heptulosonate 7-phosphate (DAHP) to dehydroquinate (DHQ). The protein is 3-dehydroquinate synthase of Campylobacter jejuni subsp. jejuni serotype O:23/36 (strain 81-176).